A 581-amino-acid chain; its full sequence is Urease subunit alpha (581 aa).

Residues 134–581 form the Urease domain; the sequence is GGFDSHIHFI…LPMTQRYFLF (448 aa). 3 residues coordinate Ni(2+): H139, H141, and K222. K222 carries the post-translational modification N6-carboxylysine. H224 is a binding site for substrate. Residues H251 and H277 each contribute to the Ni(2+) site. The active-site Proton donor is the H325. D365 serves as a coordination point for Ni(2+).

Belongs to the metallo-dependent hydrolases superfamily. Urease alpha subunit family. Heterotrimer of UreA (gamma), UreB (beta) and UreC (alpha) subunits. Three heterotrimers associate to form the active enzyme. It depends on Ni cation as a cofactor. In terms of processing, carboxylation allows a single lysine to coordinate two nickel ions.

It is found in the cytoplasm. The enzyme catalyses urea + 2 H2O + H(+) = hydrogencarbonate + 2 NH4(+). It functions in the pathway nitrogen metabolism; urea degradation; CO(2) and NH(3) from urea (urease route): step 1/1. The chain is Urease subunit alpha from Albidiferax ferrireducens (strain ATCC BAA-621 / DSM 15236 / T118) (Rhodoferax ferrireducens).